A 248-amino-acid polypeptide reads, in one-letter code: Phosphoglycerate mutase (248 aa).

Substrate contacts are provided by residues 8–15, 21–22, Arg-60, 87–90, Lys-98, 114–115, and 183–184; these read RHGQSEWN, TG, ERHY, RR, and GN. His-9 serves as the catalytic Tele-phosphohistidine intermediate. Glu-87 functions as the Proton donor/acceptor in the catalytic mechanism.

It belongs to the phosphoglycerate mutase family. BPG-dependent PGAM subfamily.

The protein resides in the cytoplasm. The catalysed reaction is (2R)-2-phosphoglycerate = (2R)-3-phosphoglycerate. It functions in the pathway carbohydrate degradation; glycolysis; pyruvate from D-glyceraldehyde 3-phosphate: step 3/5. The polypeptide is Phosphoglycerate mutase (GPM1) (Candida albicans (strain SC5314 / ATCC MYA-2876) (Yeast)).